A 441-amino-acid chain; its full sequence is tRNA(Ile)-lysidine synthase (441 aa).

27-32 (SGGVDS) contacts ATP.

Belongs to the tRNA(Ile)-lysidine synthase family.

The protein resides in the cytoplasm. It catalyses the reaction cytidine(34) in tRNA(Ile2) + L-lysine + ATP = lysidine(34) in tRNA(Ile2) + AMP + diphosphate + H(+). Its function is as follows. Ligates lysine onto the cytidine present at position 34 of the AUA codon-specific tRNA(Ile) that contains the anticodon CAU, in an ATP-dependent manner. Cytidine is converted to lysidine, thus changing the amino acid specificity of the tRNA from methionine to isoleucine. The chain is tRNA(Ile)-lysidine synthase from Proteus mirabilis (strain HI4320).